A 317-amino-acid polypeptide reads, in one-letter code: Taste receptor type 2 member 14 (317 aa).

The Extracellular portion of the chain corresponds to 1–7 (MGGVIKS). A helical membrane pass occupies residues 8–28 (IFTFVLIVEFIIGNLGNSFIA). Over 29–55 (LVNCIDWVKGRKISSVDRILTALAISR) the chain is Cytoplasmic. The helical transmembrane segment at 56 to 76 (ISLVWLIFGSWCVSVFFPALF) threads the bilayer. Residues 77 to 87 (ATEKMFRMLTN) are Extracellular-facing. Cholesterol contacts are provided by Thr-86 and Trp-89. Residues 88 to 108 (IWTVINHFSVWLATGLGTFYF) traverse the membrane as a helical segment. Over 109 to 129 (LKIANFSNSIFLYLKWRVKKV) the chain is Cytoplasmic. Residues 130 to 150 (VLVLLLVTSVFLFLNIALINI) form a helical membrane-spanning segment. At 151-184 (HINASINGYRRNKTCSSDSSNFTRFSSLIVLTST) the chain is on the extracellular side. N-linked (GlcNAc...) asparagine glycans are attached at residues Asn-153, Asn-162, and Asn-171. Val-180 serves as a coordination point for cholesterol. The chain crosses the membrane as a helical span at residues 185-205 (VFIFIPFTLSLAMFLLLIFSM). The Cytoplasmic segment spans residues 206–232 (WKHRKKMQHTVKISGDASTKAHRGVKS). The helical transmembrane segment at 233 to 253 (VITFFLLYAIFSLSFFISVWT) threads the bilayer. The Extracellular portion of the chain corresponds to 254 to 261 (SERLEENL). The chain crosses the membrane as a helical span at residues 262–282 (IILSQVMGMAYPSCHSCVLIL). Residues Ser-265 and Met-268 each coordinate cholesterol. Residues 283–317 (GNKKLRQASLSVLLWLRYMFKDGEPSGHKEFRESS) are Cytoplasmic-facing.

This sequence belongs to the G-protein coupled receptor T2R family. In terms of assembly, core component of the TAS2R14-GNAI1 complex, consisting of TAS2R14, GNAI1, GNB1 and GNG2; within the complex interacts with GNAI1. Core component of the TAS2R14-GNAT3 complex, consisting of TAS2R14, GNAT3, GNB1 and GNG2; within the complex interacts with GNAT3. Core component of the TAS2R14-GNAS2 complex, consisting of TAS2R14, GNAS2, GNB1 and GNG2; within the complex interacts with GNAS2. As to expression, highly expressed in cerebellum, pancreas, small intestine and thymus; also expressed in adipose, aorta, skin and tongue, but at significantly lower levels. Expressed in subsets of taste receptor cells of the tongue and palate epithelium and exclusively in gustducin-positive cells. Expressed in testis.

It localises to the membrane. It catalyses the reaction Ca(2+)(in) = Ca(2+)(out). The catalysed reaction is 3',5'-cyclic AMP(in) = 3',5'-cyclic AMP(out). Basal activity is enhanced by binding to bitter tastants, such as flufenamic acid and aristolochic acid. Regulated by cholesterol in a concentration-dependent manner. Its function is as follows. Gustducin-linked G-protein coupled receptor that plays a role in the perception of bitterness. The activity of this receptor stimulates GNAT3, activating the gustducin G-protein pathway. Likely plays a role in sensing the chemical composition of the gastrointestinal content and other extra-oral tissues via the inhibitory G-protein pathways. The chain is Taste receptor type 2 member 14 (TAS2R14) from Homo sapiens (Human).